Here is a 245-residue protein sequence, read N- to C-terminus: Rhamnogalacturonan acetylesterase (245 aa).

Residues Met-1–Ala-17 form the signal peptide. Ser-26 acts as the Nucleophile in catalysis. A disulfide bond links Cys-100 and Cys-108. Active-site residues include Asp-204 and His-207. Cys-226 and Cys-244 form a disulfide bridge.

It belongs to the 'GDSL' lipolytic enzyme family.

It localises to the secreted. The enzyme catalyses Hydrolytic cleavage of 2-O-acetyl- or 3-O-acetyl groups of alpha-D-galacturonic acid in rhamnogalacturonan I.. Plays a key role in the degradation of rhamnogalacturonan in the cell wall. Involved in degradation of pectin. The protein is Rhamnogalacturonan acetylesterase of Emericella nidulans (strain FGSC A4 / ATCC 38163 / CBS 112.46 / NRRL 194 / M139) (Aspergillus nidulans).